We begin with the raw amino-acid sequence, 1066 residues long: Beta-galactosidase (1066 aa).

Substrate-binding residues include Asn110 and Asp209. Residue Asp209 coordinates Na(+). Glu432, His434, and Glu477 together coordinate Mg(2+). Substrate-binding positions include Glu477 and 553-556 (EYAH). Catalysis depends on Glu477, which acts as the Proton donor. Glu553 functions as the Nucleophile in the catalytic mechanism. Residue Asn613 participates in Mg(2+) binding. Na(+) is bound by residues Phe617 and Asn620. Asn620 and Trp1041 together coordinate substrate.

It belongs to the glycosyl hydrolase 2 family. As to quaternary structure, homotetramer. The cofactor is Mg(2+). Requires Na(+) as cofactor.

The catalysed reaction is Hydrolysis of terminal non-reducing beta-D-galactose residues in beta-D-galactosides.. The protein is Beta-galactosidase of Yersinia pseudotuberculosis serotype IB (strain PB1/+).